The sequence spans 410 residues: Platelet-activating factor acetylhydrolase IB subunit alpha (410 aa).

The interval 1–38 is required for self-association and interaction with PAFAH1B2 and PAFAH1B3; the sequence is MVLSQRQRDELNRAIADYLRSNGYEEAYSVFKKEAELD. The interval 1 to 66 is interaction with NDE1; it reads MVLSQRQRDE…SVIRLQKKVM (66 aa). The interval 1–102 is interaction with NDEL1; it reads MVLSQRQRDE…EWIPRPPEKY (102 aa). Residues 7 to 39 form the LisH domain; sequence QRDELNRAIADYLRSNGYEEAYSVFKKEAELDM. Position 53 is an N6-acetyllysine (Lys-53). Positions 56 to 82 form a coiled coil; sequence TSVIRLQKKVMELESKLNEAKEEFTSG. The interaction with dynein and dynactin stretch occupies residues 83–410; that stretch reads GPLGQKRDPK…DQTVKVWECR (328 aa). WD repeat units lie at residues 106 to 147, 148 to 187, 190 to 229, 232 to 271, 274 to 333, 336 to 377, and 378 to 410; these read GHRS…RTLK, GHTD…CIRT, GHDH…CVKT, GHRE…CKAE, EHEH…CLMT, GHDN…KTLN, and AHEH…WECR. Ser-109 is subject to Phosphoserine. The tract at residues 367-409 is interaction with DCX; it reads YKNKRCMKTLNAHEHFVTSLDFHKTAPYVVTGSVDQTVKVWEC. The segment at 388-410 is interaction with NDEL1; it reads FHKTAPYVVTGSVDQTVKVWECR.

This sequence belongs to the WD repeat LIS1/nudF family. Can self-associate. Component of the cytosolic PAF-AH (I) heterotetrameric enzyme, which is composed of PAFAH1B1 (beta), PAFAH1B2 (alpha2) and PAFAH1B3 (alpha1) subunits. The catalytic activity of the enzyme resides in the alpha1 (PAFAH1B3) and alpha2 (PAFAH1B2) subunits, whereas the beta subunit (PAFAH1B1) has regulatory activity. Trimer formation is not essential for the catalytic activity. Interacts with the catalytic dimer of PAF-AH (I) heterotetrameric enzyme: interacts with PAFAH1B2 homodimer (alpha2/alpha2 homodimer), PAFAH1B3 homodimer (alpha1/alpha1 homodimer) and PAFAH1B2-PAFAH1B3 heterodimer (alpha2/alpha1 heterodimer). Interacts with DCX, dynein, dynactin, IQGAP1, KATNB1, NDE1, NDEL1, NUDC and RSN. Interacts with DISC1, and this interaction is enhanced by NDEL1. Interacts with DAB1 when DAB1 is phosphorylated in response to RELN/reelin signaling. Interacts with INTS13. Interacts with DCDC1.

Its subcellular location is the cytoplasm. The protein resides in the cytoskeleton. It is found in the microtubule organizing center. It localises to the centrosome. The protein localises to the spindle. Its subcellular location is the nucleus membrane. In terms of biological role, regulatory subunit (beta subunit) of the cytosolic type I platelet-activating factor (PAF) acetylhydrolase (PAF-AH (I)), an enzyme that catalyzes the hydrolyze of the acetyl group at the sn-2 position of PAF and its analogs and participates in PAF inactivation. Regulates the PAF-AH (I) activity in a catalytic dimer composition-dependent manner. Positively regulates the activity of the minus-end directed microtubule motor protein dynein. May enhance dynein-mediated microtubule sliding by targeting dynein to the microtubule plus end. Required for several dynein- and microtubule-dependent processes such as the maintenance of Golgi integrity, the peripheral transport of microtubule fragments and the coupling of the nucleus and centrosome. Required during brain development for the proliferation of neuronal precursors and the migration of newly formed neurons from the ventricular/subventricular zone toward the cortical plate. Neuronal migration involves a process called nucleokinesis, whereby migrating cells extend an anterior process into which the nucleus subsequently translocates. During nucleokinesis dynein at the nuclear surface may translocate the nucleus towards the centrosome by exerting force on centrosomal microtubules. Also required for proper activation of Rho GTPases and actin polymerization at the leading edge of locomoting cerebellar neurons and postmigratory hippocampal neurons in response to calcium influx triggered via NMDA receptors. May also play a role in other forms of cell locomotion including the migration of fibroblasts during wound healing. Required for dynein recruitment to microtubule plus ends and BICD2-bound cargos. May modulate the Reelin pathway through interaction of the PAF-AH (I) catalytic dimer with VLDLR. In Sus scrofa (Pig), this protein is Platelet-activating factor acetylhydrolase IB subunit alpha.